A 552-amino-acid chain; its full sequence is Probable malate:quinone oxidoreductase (552 aa).

A disordered region spans residues 530–552; sequence DAKPATPEAKPAQASSPQHDMAL. A compositionally biased stretch (polar residues) spans 542-552; that stretch reads QASSPQHDMAL.

This sequence belongs to the MQO family. It depends on FAD as a cofactor.

The catalysed reaction is (S)-malate + a quinone = a quinol + oxaloacetate. The protein operates within carbohydrate metabolism; tricarboxylic acid cycle; oxaloacetate from (S)-malate (quinone route): step 1/1. The sequence is that of Probable malate:quinone oxidoreductase from Cronobacter sakazakii (strain ATCC BAA-894) (Enterobacter sakazakii).